The primary structure comprises 247 residues: Small ribosomal subunit protein uS2 (247 aa).

Belongs to the universal ribosomal protein uS2 family.

The chain is Small ribosomal subunit protein uS2 from Fusobacterium nucleatum subsp. nucleatum (strain ATCC 25586 / DSM 15643 / BCRC 10681 / CIP 101130 / JCM 8532 / KCTC 2640 / LMG 13131 / VPI 4355).